The following is a 450-amino-acid chain: Phosphoglucosamine mutase (450 aa).

The Phosphoserine intermediate role is filled by Ser102. Mg(2+) is bound by residues Ser102, Asp244, Asp246, and Asp248. Ser102 is modified (phosphoserine).

This sequence belongs to the phosphohexose mutase family. Requires Mg(2+) as cofactor. Activated by phosphorylation.

It carries out the reaction alpha-D-glucosamine 1-phosphate = D-glucosamine 6-phosphate. Functionally, catalyzes the conversion of glucosamine-6-phosphate to glucosamine-1-phosphate. The sequence is that of Phosphoglucosamine mutase from Nitratidesulfovibrio vulgaris (strain ATCC 29579 / DSM 644 / CCUG 34227 / NCIMB 8303 / VKM B-1760 / Hildenborough) (Desulfovibrio vulgaris).